Consider the following 384-residue polypeptide: Chorismate synthase (384 aa).

Positions 40 and 46 each coordinate NADP(+). FMN contacts are provided by residues 127 to 129 (RTS), 247 to 248 (QA), alanine 292, 307 to 311 (KPIPT), and arginine 333.

This sequence belongs to the chorismate synthase family. As to quaternary structure, homotetramer. FMNH2 is required as a cofactor.

It carries out the reaction 5-O-(1-carboxyvinyl)-3-phosphoshikimate = chorismate + phosphate. It participates in metabolic intermediate biosynthesis; chorismate biosynthesis; chorismate from D-erythrose 4-phosphate and phosphoenolpyruvate: step 7/7. In terms of biological role, catalyzes the anti-1,4-elimination of the C-3 phosphate and the C-6 proR hydrogen from 5-enolpyruvylshikimate-3-phosphate (EPSP) to yield chorismate, which is the branch point compound that serves as the starting substrate for the three terminal pathways of aromatic amino acid biosynthesis. This reaction introduces a second double bond into the aromatic ring system. The polypeptide is Chorismate synthase (Alkaliphilus oremlandii (strain OhILAs) (Clostridium oremlandii (strain OhILAs))).